A 38-amino-acid chain; its full sequence is DNA binding protein ORF8 (38 aa).

This sequence belongs to the microviridae J protein family.

The protein localises to the virion. The protein resides in the host cytoplasm. In terms of biological role, mediates ssDNA packaging into virion, it locates to the internal surface of the capsid, thereby displacing the internal scaffolding protein during virion formation. Additionally, protein ORF8 plays a role in viral attachment to the host cell. This is DNA binding protein ORF8 from Spiroplasma melliferum (SpV4).